Here is a 442-residue protein sequence, read N- to C-terminus: C4-dicarboxylate transport protein (442 aa).

The next 8 membrane-spanning stretches (helical) occupy residues 10 to 30 (VQVL…PSFG), 40 to 60 (FIKL…VSGI), 77 to 97 (LIYF…VANI), 149 to 169 (LLQV…LGTL), 185 to 205 (FVIL…AMAF), 221 to 241 (LMVA…GLIA), 288 to 308 (VVGL…SIYL), and 354 to 374 (AATL…ILGI). Residues 420 to 442 (PATPEVAAEERGEGRGLDGPLPA) form a disordered region.

It belongs to the dicarboxylate/amino acid:cation symporter (DAACS) (TC 2.A.23) family.

The protein resides in the cell membrane. Functionally, responsible for the transport of dicarboxylates such as succinate, fumarate, and malate across the membrane. This Deinococcus geothermalis (strain DSM 11300 / CIP 105573 / AG-3a) protein is C4-dicarboxylate transport protein.